We begin with the raw amino-acid sequence, 292 residues long: NAD-dependent protein deacetylase sir-2.4 (292 aa).

The Deacetylase sirtuin-type domain occupies 31–292 (IEKLRTLYNH…DEVPIPLKIS (262 aa)). Residues 56-75 (GAGV…QGVW) and 116-119 (QNVD) each bind NAD(+). Residue H136 is the Proton acceptor of the active site. The Zn(2+) site is built by C144, C147, C163, and C169. NAD(+) contacts are provided by residues 216–218 (GTS), 242–244 (NYQ), and V260.

Belongs to the sirtuin family. Class IV subfamily. It depends on Zn(2+) as a cofactor.

It catalyses the reaction N(6)-acetyl-L-lysyl-[protein] + NAD(+) + H2O = 2''-O-acetyl-ADP-D-ribose + nicotinamide + L-lysyl-[protein]. In terms of biological role, NAD-dependent protein deacetylase. The protein is NAD-dependent protein deacetylase sir-2.4 (sir-2.4) of Caenorhabditis elegans.